The primary structure comprises 440 residues: Xaa-Pro dipeptidase (440 aa).

Asp-241, Asp-252, His-333, Glu-378, and Glu-417 together coordinate Mn(2+).

Belongs to the peptidase M24B family. Bacterial-type prolidase subfamily. The cofactor is Mn(2+).

The catalysed reaction is Xaa-L-Pro dipeptide + H2O = an L-alpha-amino acid + L-proline. Its function is as follows. Splits dipeptides with a prolyl residue in the C-terminal position. This is Xaa-Pro dipeptidase from Glaesserella parasuis serovar 5 (strain SH0165) (Haemophilus parasuis).